The chain runs to 135 residues: Large ribosomal subunit protein uL16c (135 aa).

Belongs to the universal ribosomal protein uL16 family. As to quaternary structure, part of the 50S ribosomal subunit.

Its subcellular location is the plastid. The protein resides in the chloroplast. In Ceratophyllum demersum (Rigid hornwort), this protein is Large ribosomal subunit protein uL16c.